The following is a 206-amino-acid chain: Small ribosomal subunit protein uS4 (206 aa).

The region spanning 96–168 is the S4 RNA-binding domain; sequence SRLDNVVYRM…LELAEQREKP (73 aa).

Belongs to the universal ribosomal protein uS4 family. Part of the 30S ribosomal subunit. Contacts protein S5. The interaction surface between S4 and S5 is involved in control of translational fidelity.

Functionally, one of the primary rRNA binding proteins, it binds directly to 16S rRNA where it nucleates assembly of the body of the 30S subunit. In terms of biological role, with S5 and S12 plays an important role in translational accuracy. In Baumannia cicadellinicola subsp. Homalodisca coagulata, this protein is Small ribosomal subunit protein uS4.